The following is a 64-amino-acid chain: Large ribosomal subunit protein bL28 (64 aa).

The tract at residues 1–26 (MARRDQLTGKGPLSGNTRSHAMNHSK) is disordered.

The protein belongs to the bacterial ribosomal protein bL28 family.

This chain is Large ribosomal subunit protein bL28, found in Ureaplasma urealyticum serovar 10 (strain ATCC 33699 / Western).